Here is a 322-residue protein sequence, read N- to C-terminus: o-succinylbenzoate synthase (322 aa).

Lys136 serves as the catalytic Proton donor. Residues Asp165, Glu194, and Asp219 each coordinate Mg(2+). Lys243 serves as the catalytic Proton acceptor.

The protein belongs to the mandelate racemase/muconate lactonizing enzyme family. MenC type 1 subfamily. Monomer. Requires a divalent metal cation as cofactor.

It carries out the reaction (1R,6R)-6-hydroxy-2-succinyl-cyclohexa-2,4-diene-1-carboxylate = 2-succinylbenzoate + H2O. It participates in quinol/quinone metabolism; 1,4-dihydroxy-2-naphthoate biosynthesis; 1,4-dihydroxy-2-naphthoate from chorismate: step 4/7. Its pathway is cofactor biosynthesis; phylloquinone biosynthesis. Converts 2-succinyl-6-hydroxy-2,4-cyclohexadiene-1-carboxylate (SHCHC) to 2-succinylbenzoate (OSB). Does not show N-succinylamino acid racemase (NSAR) activity with N-succinyl-L-phenylglycine as substrate. The polypeptide is o-succinylbenzoate synthase (Thermosynechococcus vestitus (strain NIES-2133 / IAM M-273 / BP-1)).